A 93-amino-acid polypeptide reads, in one-letter code: Putative regulatory protein Fnod_1678 (93 aa).

Belongs to the RemA family.

The sequence is that of Putative regulatory protein Fnod_1678 from Fervidobacterium nodosum (strain ATCC 35602 / DSM 5306 / Rt17-B1).